Consider the following 217-residue polypeptide: Guanylate kinase (217 aa).

A compositionally biased stretch (low complexity) spans 1-10 (MAVSSTTLSS). The interval 1–30 (MAVSSTTLSSPTPPECLQQQEAPRPPATRG) is disordered. A Guanylate kinase-like domain is found at 30 to 208 (GRLVVLTGPS…ALQELEALLY (179 aa)). Residue 37–44 (GPSGVGKG) coordinates ATP.

The protein belongs to the guanylate kinase family.

The protein resides in the cytoplasm. The enzyme catalyses GMP + ATP = GDP + ADP. The catalysed reaction is dZMP + ATP = dZDP + ADP. It functions in the pathway purine metabolism. In terms of biological role, essential for recycling GMP and indirectly, cGMP. Functionally, (Microbial infection) Catalyzes the phosphorylation of dZMP to dZDP, when the bacterium is infected by a phage that produces the substrate for the synthesis of dZTP (2- amino-2'-deoxyadenosine 5'-triphosphate), which is then used by the phage as a DNA polymerase substrate. In Synechococcus sp. (strain JA-3-3Ab) (Cyanobacteria bacterium Yellowstone A-Prime), this protein is Guanylate kinase.